Reading from the N-terminus, the 156-residue chain is Small ribosomal subunit protein uS7 (156 aa).

It belongs to the universal ribosomal protein uS7 family. Part of the 30S ribosomal subunit. Contacts proteins S9 and S11.

Functionally, one of the primary rRNA binding proteins, it binds directly to 16S rRNA where it nucleates assembly of the head domain of the 30S subunit. Is located at the subunit interface close to the decoding center, probably blocks exit of the E-site tRNA. This chain is Small ribosomal subunit protein uS7, found in Nitratiruptor sp. (strain SB155-2).